The sequence spans 284 residues: uncharacterized protein (284 aa).

This is an uncharacterized protein from Streptomyces fradiae (Streptomyces roseoflavus).